We begin with the raw amino-acid sequence, 463 residues long: Autophagy-related protein 36 (463 aa).

The segment at 5 to 45 (CSICLEVLVDKEAFTEPCLHYYHNECIKEWTKRANTCPKCR) adopts an RING-type; atypical zinc-finger fold. Residues 85–131 (TNLCALCEDPSTSLIYCESCGGSFHFNCIGIGDELDSEWCCPLCGMF) form a PHD-type zinc finger. Polar residues predominate over residues 229 to 242 (TQNSQSSEFSTENN). A disordered region spans residues 229–281 (TQNSQSSEFSTENNVVPLKNTHELGRKLKKPRRASGIKKNVVERSSSHQSTQI). Over residues 255–264 (KLKKPRRASG) the composition is skewed to basic residues.

In terms of assembly, interacts with ATG28.

Micropexophagy-specific protein required for efficient micropexophagic apparatus (MIPA) formation but not for general autophagy. In Komagataella phaffii (strain GS115 / ATCC 20864) (Yeast), this protein is Autophagy-related protein 36 (ATG35).